The primary structure comprises 251 residues: Eukaryotic translation initiation factor 3 subunit K (251 aa).

The PCI domain occupies 46–224 (FDCYANLALL…VKVPTNKENE (179 aa)).

Belongs to the eIF-3 subunit K family. Component of the eukaryotic translation initiation factor 3 (eIF-3) complex.

Its subcellular location is the cytoplasm. Component of the eukaryotic translation initiation factor 3 (eIF-3) complex, which is involved in protein synthesis of a specialized repertoire of mRNAs and, together with other initiation factors, stimulates binding of mRNA and methionyl-tRNAi to the 40S ribosome. The eIF-3 complex specifically targets and initiates translation of a subset of mRNAs involved in cell proliferation. The protein is Eukaryotic translation initiation factor 3 subunit K of Aspergillus oryzae (strain ATCC 42149 / RIB 40) (Yellow koji mold).